Here is a 340-residue protein sequence, read N- to C-terminus: Putative D-lactate dehydrogenase (340 aa).

NAD(+) is bound by residues 153-154 (NI), Asp-174, 206-207 (TP), 233-235 (VSR), and Asp-259. Arg-235 is a catalytic residue. Glu-264 is an active-site residue. The active-site Proton donor is His-296.

This sequence belongs to the D-isomer specific 2-hydroxyacid dehydrogenase family.

It catalyses the reaction (R)-lactate + NAD(+) = pyruvate + NADH + H(+). The chain is Putative D-lactate dehydrogenase (ldhA) from Dictyostelium discoideum (Social amoeba).